A 138-amino-acid chain; its full sequence is uncharacterized protein (138 aa).

The tract at residues 1–27 is disordered; sequence MEGELIENNGLDIYDTSETPKKRGRPA.

This is an uncharacterized protein from Escherichia coli (strain K12).